Consider the following 200-residue polypeptide: Shikimate kinase (200 aa).

33 to 38 (GAGKST) provides a ligand contact to ATP. Serine 37 lines the Mg(2+) pocket. Positions 55, 79, and 101 each coordinate substrate. Arginine 139 contacts ATP. Arginine 158 serves as a coordination point for substrate.

It belongs to the shikimate kinase family. Monomer. Mg(2+) serves as cofactor.

It is found in the cytoplasm. The catalysed reaction is shikimate + ATP = 3-phosphoshikimate + ADP + H(+). The protein operates within metabolic intermediate biosynthesis; chorismate biosynthesis; chorismate from D-erythrose 4-phosphate and phosphoenolpyruvate: step 5/7. Its function is as follows. Catalyzes the specific phosphorylation of the 3-hydroxyl group of shikimic acid using ATP as a cosubstrate. The chain is Shikimate kinase from Brucella abortus (strain S19).